The sequence spans 387 residues: Beta-carotene 4-ketolase (387 aa).

Residues 1 to 78 (MPHSIDMEDS…GNPTVDDASQ (78 aa)) form a disordered region. 2 stretches are compositionally biased toward polar residues: residues 43-53 (NWQTQYHSSEG) and 65-78 (DATT…DASQ).

The catalysed reaction is echinenone + 2 AH2 + 2 O2 = canthaxanthin + 2 A + 3 H2O. The enzyme catalyses all-trans-beta-carotene + 2 AH2 + 2 O2 = echinenone + 2 A + 3 H2O. It functions in the pathway carotenoid biosynthesis. Functionally, involved in the biosynthesis of ketocarotenoids which are powerful anti-oxidative molecules. Catalyzes the conversion of beta-carotene to canthaxanthin via echinenone. The chain is Beta-carotene 4-ketolase from Protosiphon botryoides (Green alga).